An 866-amino-acid chain; its full sequence is N-alpha-acetyltransferase 15, NatA auxiliary subunit (866 aa).

4 TPR repeats span residues 46–79, 80–113, 148–184, and 224–257; these read GETLAMKGLTLNCLGKKEEAYELVRRGLRNDLKS, HVCWHVYGLLQRSDKKYDEAIKCYRNALKWDKDN, RASWIGYAIAYHLLEDYEMAAKILEEFRKTQQTSPDK, and LAVEETKGELLLQLCRLEDAADVYRGLQERNPEN. K262 is modified (N6-acetyllysine). At S302 the chain carries Phosphoserine. 3 TPR repeats span residues 374–407, 409–441, and 485–522; these read LWVQYYLAQHYDKIGQPSIALEYINTAIESTPTL, ELFLVKAKIYKHAGNIKEAARWMDEAQALDTAD, and MWFQTECAQAYKAMNKFGEALKKCYEIERHFIEITDDQ. The segment at 500-866 is interaction with HYPK; sequence KFGEALKKCY…AEAEELANEI (367 aa). Phosphoserine occurs at positions 537 and 588. The segment covering 579–594 has biased composition (basic and acidic residues); the sequence is EHEADTANMSDKELKK. The tract at residues 579–642 is disordered; the sequence is EHEADTANMS…EEIGGPKEEL (64 aa). Over residues 595-604 the composition is skewed to basic residues; it reads LRNKQRRAQK. Positions 606 to 621 are enriched in basic and acidic residues; it reads AQIEEEKKNAEKEKQQ. The stretch at 672-705 is one TPR 8 repeat; the sequence is IETHLFAFEIYFRKEKFLLMLQSVKRAFAIDSSH. An N6-acetyllysine mark is found at K735 and K756. Phosphoserine is present on residues S855 and S856.

Component of the N-terminal acetyltransferase A (NatA) complex composed of NAA10 or probably NAA11 and NAA15. Interacts with XRCC6, NAA50 and XRCC5. Associates with HYPK when in a complex with NAA10. Interaction with HYPK reduces the capacity to interact with NAA50. Cleaved by caspases during apoptosis.

The protein localises to the cytoplasm. The protein resides in the nucleus. Functionally, auxillary subunit of the N-terminal acetyltransferase A (NatA) complex which displays alpha (N-terminal) acetyltransferase activity. The NAT activity may be important for vascular, hematopoietic and neuronal growth and development. Required to control retinal neovascularization in adult ocular endothelial cells. In complex with XRCC6 and XRCC5 (Ku80), up-regulates transcription from the osteocalcin promoter. The chain is N-alpha-acetyltransferase 15, NatA auxiliary subunit (NAA15) from Pongo abelii (Sumatran orangutan).